The sequence spans 162 residues: Endoribonuclease YbeY (162 aa).

Zn(2+)-binding residues include histidine 117, histidine 121, and histidine 127.

It belongs to the endoribonuclease YbeY family. The cofactor is Zn(2+).

It is found in the cytoplasm. In terms of biological role, single strand-specific metallo-endoribonuclease involved in late-stage 70S ribosome quality control and in maturation of the 3' terminus of the 16S rRNA. The protein is Endoribonuclease YbeY of Francisella tularensis subsp. mediasiatica (strain FSC147).